The primary structure comprises 296 residues: Formamidopyrimidine-DNA glycosylase (296 aa).

Pro2 serves as the catalytic Schiff-base intermediate with DNA. The active-site Proton donor is Glu3. Lys58 serves as the catalytic Proton donor; for beta-elimination activity. DNA-binding residues include His104, Arg126, and Lys169. The FPG-type zinc finger occupies 260–296 (SVYDRAGEACRKPGCDGTVTRIVQAGRSTFHCPRCQK). The active-site Proton donor; for delta-elimination activity is the Arg286.

This sequence belongs to the FPG family. Monomer. Requires Zn(2+) as cofactor.

The catalysed reaction is Hydrolysis of DNA containing ring-opened 7-methylguanine residues, releasing 2,6-diamino-4-hydroxy-5-(N-methyl)formamidopyrimidine.. The enzyme catalyses 2'-deoxyribonucleotide-(2'-deoxyribose 5'-phosphate)-2'-deoxyribonucleotide-DNA = a 3'-end 2'-deoxyribonucleotide-(2,3-dehydro-2,3-deoxyribose 5'-phosphate)-DNA + a 5'-end 5'-phospho-2'-deoxyribonucleoside-DNA + H(+). Functionally, involved in base excision repair of DNA damaged by oxidation or by mutagenic agents. Acts as a DNA glycosylase that recognizes and removes damaged bases. Has a preference for oxidized purines, such as 7,8-dihydro-8-oxoguanine (8-oxoG). Has AP (apurinic/apyrimidinic) lyase activity and introduces nicks in the DNA strand. Cleaves the DNA backbone by beta-delta elimination to generate a single-strand break at the site of the removed base with both 3'- and 5'-phosphates. The polypeptide is Formamidopyrimidine-DNA glycosylase (Sinorhizobium fredii (strain NBRC 101917 / NGR234)).